A 357-amino-acid chain; its full sequence is Selenide, water dikinase (357 aa).

The active site involves C25. ATP-binding positions include K28 and 57–59 (TAD). D60 contributes to the Mg(2+) binding site. ATP is bound by residues D77, D100, and 148–150 (GHS). D100 serves as a coordination point for Mg(2+). D236 contacts Mg(2+).

It belongs to the selenophosphate synthase 1 family. Class I subfamily. Homodimer. It depends on Mg(2+) as a cofactor.

The catalysed reaction is hydrogenselenide + ATP + H2O = selenophosphate + AMP + phosphate + 2 H(+). Synthesizes selenophosphate from selenide and ATP. This chain is Selenide, water dikinase, found in Pseudomonas straminea.